An 84-amino-acid polypeptide reads, in one-letter code: ATP synthase subunit c (84 aa).

The next 2 membrane-spanning stretches (helical) occupy residues 8 to 28 (VAGMCAIGAGLASIACIGGGI) and 56 to 76 (IIGSALSEATAIYGFLIAILL).

Belongs to the ATPase C chain family. F-type ATPases have 2 components, F(1) - the catalytic core - and F(0) - the membrane proton channel. F(1) has five subunits: alpha(3), beta(3), gamma(1), delta(1), epsilon(1). F(0) has three main subunits: a(1), b(2) and c(10-14). The alpha and beta chains form an alternating ring which encloses part of the gamma chain. F(1) is attached to F(0) by a central stalk formed by the gamma and epsilon chains, while a peripheral stalk is formed by the delta and b chains.

The protein localises to the cell membrane. Functionally, f(1)F(0) ATP synthase produces ATP from ADP in the presence of a proton or sodium gradient. F-type ATPases consist of two structural domains, F(1) containing the extramembraneous catalytic core and F(0) containing the membrane proton channel, linked together by a central stalk and a peripheral stalk. During catalysis, ATP synthesis in the catalytic domain of F(1) is coupled via a rotary mechanism of the central stalk subunits to proton translocation. In terms of biological role, key component of the F(0) channel; it plays a direct role in translocation across the membrane. A homomeric c-ring of between 10-14 subunits forms the central stalk rotor element with the F(1) delta and epsilon subunits. This is ATP synthase subunit c from Clostridium novyi (strain NT).